The primary structure comprises 404 residues: Argininosuccinate synthase (404 aa).

Residues 10–18 (AYSGGVDTS) and Ala38 each bind ATP. Tyr89 is an L-citrulline binding site. Gly119 provides a ligand contact to ATP. Positions 121, 125, and 126 each coordinate L-aspartate. Asn125 contacts L-citrulline. L-citrulline is bound by residues Arg129, Ser177, Ser186, Glu262, and Tyr274.

It belongs to the argininosuccinate synthase family. Type 1 subfamily. Homotetramer.

The protein resides in the cytoplasm. It catalyses the reaction L-citrulline + L-aspartate + ATP = 2-(N(omega)-L-arginino)succinate + AMP + diphosphate + H(+). It participates in amino-acid biosynthesis; L-arginine biosynthesis; L-arginine from L-ornithine and carbamoyl phosphate: step 2/3. This chain is Argininosuccinate synthase, found in Prochlorococcus marinus subsp. pastoris (strain CCMP1986 / NIES-2087 / MED4).